A 351-amino-acid polypeptide reads, in one-letter code: Transaldolase (351 aa).

Lys138 functions as the Schiff-base intermediate with substrate in the catalytic mechanism.

Belongs to the transaldolase family. Type 2 subfamily.

The protein resides in the cytoplasm. It carries out the reaction D-sedoheptulose 7-phosphate + D-glyceraldehyde 3-phosphate = D-erythrose 4-phosphate + beta-D-fructose 6-phosphate. It participates in carbohydrate degradation; pentose phosphate pathway; D-glyceraldehyde 3-phosphate and beta-D-fructose 6-phosphate from D-ribose 5-phosphate and D-xylulose 5-phosphate (non-oxidative stage): step 2/3. In terms of biological role, transaldolase is important for the balance of metabolites in the pentose-phosphate pathway. The sequence is that of Transaldolase from Neisseria meningitidis serogroup C (strain 053442).